The sequence spans 423 residues: Serine hydroxymethyltransferase (423 aa).

(6S)-5,6,7,8-tetrahydrofolate contacts are provided by residues L120 and 124 to 126 (GHL). Residue K229 is modified to N6-(pyridoxal phosphate)lysine. (6S)-5,6,7,8-tetrahydrofolate is bound at residue 353–355 (SPF).

Belongs to the SHMT family. In terms of assembly, homodimer. The cofactor is pyridoxal 5'-phosphate.

It localises to the cytoplasm. The catalysed reaction is (6R)-5,10-methylene-5,6,7,8-tetrahydrofolate + glycine + H2O = (6S)-5,6,7,8-tetrahydrofolate + L-serine. It participates in one-carbon metabolism; tetrahydrofolate interconversion. It functions in the pathway amino-acid biosynthesis; glycine biosynthesis; glycine from L-serine: step 1/1. Catalyzes the reversible interconversion of serine and glycine with tetrahydrofolate (THF) serving as the one-carbon carrier. This reaction serves as the major source of one-carbon groups required for the biosynthesis of purines, thymidylate, methionine, and other important biomolecules. Also exhibits THF-independent aldolase activity toward beta-hydroxyamino acids, producing glycine and aldehydes, via a retro-aldol mechanism. The sequence is that of Serine hydroxymethyltransferase from Prochlorococcus marinus (strain AS9601).